A 177-amino-acid polypeptide reads, in one-letter code: Large ribosomal subunit protein uL6 (177 aa).

The protein belongs to the universal ribosomal protein uL6 family. In terms of assembly, part of the 50S ribosomal subunit.

Functionally, this protein binds to the 23S rRNA, and is important in its secondary structure. It is located near the subunit interface in the base of the L7/L12 stalk, and near the tRNA binding site of the peptidyltransferase center. The protein is Large ribosomal subunit protein uL6 of Shewanella frigidimarina (strain NCIMB 400).